The chain runs to 220 residues: U1 small nuclear ribonucleoprotein C (220 aa).

The segment at 4-36 (FFCDYCDVYLTHDSISVRKAHNSGRNHLRNVVD) adopts a Matrin-type zinc-finger fold. The disordered stretch occupies residues 197–220 (PLGGFPAGAPLPGAPPGYGPPGAK). Over residues 208–220 (PGAPPGYGPPGAK) the composition is skewed to pro residues.

The protein belongs to the U1 small nuclear ribonucleoprotein C family. U1 snRNP is composed of the 7 core Sm proteins B/B', D1, D2, D3, E, F and G that assemble in a heptameric protein ring on the Sm site of the small nuclear RNA to form the core snRNP, and at least 3 U1 snRNP-specific proteins U1-70K, U1-A and U1-C. U1-C interacts with U1 snRNA and the 5' splice-site region of the pre-mRNA.

It localises to the nucleus. Functionally, component of the spliceosomal U1 snRNP, which is essential for recognition of the pre-mRNA 5' splice-site and the subsequent assembly of the spliceosome. U1-C is directly involved in initial 5' splice-site recognition for both constitutive and regulated alternative splicing. The interaction with the 5' splice-site seems to precede base-pairing between the pre-mRNA and the U1 snRNA. Stimulates commitment or early (E) complex formation by stabilizing the base pairing of the 5' end of the U1 snRNA and the 5' splice-site region. The polypeptide is U1 small nuclear ribonucleoprotein C (Tuber melanosporum (strain Mel28) (Perigord black truffle)).